Here is a 287-residue protein sequence, read N- to C-terminus: Fructose-1,6-bisphosphatase class 1 (287 aa).

4 residues coordinate Mg(2+): Glu67, Asp86, Leu88, and Asp89. Substrate contacts are provided by residues 89 to 92, Tyr195, and Lys226; that span reads DGSS. Glu232 lines the Mg(2+) pocket.

The protein belongs to the FBPase class 1 family. As to quaternary structure, homotetramer. Mg(2+) serves as cofactor.

It localises to the cytoplasm. The catalysed reaction is beta-D-fructose 1,6-bisphosphate + H2O = beta-D-fructose 6-phosphate + phosphate. It functions in the pathway carbohydrate biosynthesis; gluconeogenesis. The polypeptide is Fructose-1,6-bisphosphatase class 1 (Campylobacter concisus (strain 13826)).